Here is a 236-residue protein sequence, read N- to C-terminus: MTKRYWNINLEEMMEAGVHFGHGTRKWNPRMAPYISAKRKGIHITNLTRTARFLSETCDLVFDAASRGKHFLIVGTKSKAADLVALAAIRARCHYVNKKWLGGMLTNWSTTETRLHKFRDLRAEQRAGKLNCLPKRDAAMLKRKLSHLQTYLGGIKYMTGLPDIVIIVDQHEEYTALRECITLGIPTICLIDTNCDPDLSDISIPANDDAIASIRLILNKLVSALCEGHSSYIRNR.

The protein belongs to the universal ribosomal protein uS2 family.

It localises to the plastid. It is found in the chloroplast. This is Small ribosomal subunit protein uS2c (rps2) from Piper cenocladum (Ant piper).